The primary structure comprises 239 residues: Purine nucleoside phosphorylase DeoD-type (239 aa).

His-5 lines the a purine D-ribonucleoside pocket. Phosphate is bound by residues Gly-21, Arg-25, Arg-44, and 88-91; that span reads RVGS. Residues 180–182 and 204–205 each bind a purine D-ribonucleoside; these read EME and SD. The active-site Proton donor is the Asp-205.

This sequence belongs to the PNP/UDP phosphorylase family. In terms of assembly, homohexamer; trimer of homodimers.

The enzyme catalyses a purine D-ribonucleoside + phosphate = a purine nucleobase + alpha-D-ribose 1-phosphate. It carries out the reaction a purine 2'-deoxy-D-ribonucleoside + phosphate = a purine nucleobase + 2-deoxy-alpha-D-ribose 1-phosphate. Functionally, catalyzes the reversible phosphorolytic breakdown of the N-glycosidic bond in the beta-(deoxy)ribonucleoside molecules, with the formation of the corresponding free purine bases and pentose-1-phosphate. In Klebsiella pneumoniae (strain 342), this protein is Purine nucleoside phosphorylase DeoD-type.